Here is a 399-residue protein sequence, read N- to C-terminus: MKTYQVNKEGYYGEFGGAYIPEILHRCVEELQNAYSKVLESEGFKQEFHQLLRDYVGRPSPLYLANRLSKKYGCKIYLKREDLNHTGAHKINNAIGQVLLAKRMGKKRIIAETGAGQHGVATATVCALMNMQCIVYMGKTDVERQHINVEKMKMLGAEVRPVTSGNMTLKDATNEAIRDWCCHPADTYYVIGSTVGPHPYPDMVARLQSVISEEIKKQLKEQEGREYPDYLMACVGGGSNAAGTIYHYIDDERVQIVLAEAGGKGIDTGFSAATIQLGKMGIIHGAKTLVIQNEDGQIEEPYSISAGLDYPGIGPMHANLAKQQRALVLAINDDEAIRAAFELTRLEGIIPALESAHALGALDKMRFKPTDIVVLTVSGRGDKDIETYLKESGTRTSLQ.

The residue at position 90 (K90) is an N6-(pyridoxal phosphate)lysine.

This sequence belongs to the TrpB family. Tetramer of two alpha and two beta chains. The cofactor is pyridoxal 5'-phosphate.

It carries out the reaction (1S,2R)-1-C-(indol-3-yl)glycerol 3-phosphate + L-serine = D-glyceraldehyde 3-phosphate + L-tryptophan + H2O. It participates in amino-acid biosynthesis; L-tryptophan biosynthesis; L-tryptophan from chorismate: step 5/5. Its function is as follows. The beta subunit is responsible for the synthesis of L-tryptophan from indole and L-serine. The chain is Tryptophan synthase beta chain from Phocaeicola vulgatus (strain ATCC 8482 / DSM 1447 / JCM 5826 / CCUG 4940 / NBRC 14291 / NCTC 11154) (Bacteroides vulgatus).